The sequence spans 91 residues: DNA-directed RNA polymerase subunit omega (91 aa).

The protein belongs to the RNA polymerase subunit omega family. In terms of assembly, the RNAP catalytic core consists of 2 alpha, 1 beta, 1 beta' and 1 omega subunit. When a sigma factor is associated with the core the holoenzyme is formed, which can initiate transcription.

It carries out the reaction RNA(n) + a ribonucleoside 5'-triphosphate = RNA(n+1) + diphosphate. Functionally, promotes RNA polymerase assembly. Latches the N- and C-terminal regions of the beta' subunit thereby facilitating its interaction with the beta and alpha subunits. In Sodalis glossinidius (strain morsitans), this protein is DNA-directed RNA polymerase subunit omega.